The following is a 167-amino-acid chain: Caffeine dehydrogenase subunit gamma (167 aa).

The 2Fe-2S ferredoxin-type domain occupies 4–80 (HVISLTVNGQ…GHSIRTVEAL (77 aa)). [2Fe-2S] cluster contacts are provided by cysteine 42, cysteine 47, cysteine 50, and cysteine 62.

As to quaternary structure, heterotrimer composed of an alpha (CdhA), a beta (CdhB) and a gamma (CdhC) subunit.

The catalysed reaction is caffeine + a ubiquinone + H2O = 1,3,7-trimethylurate + a ubiquinol. The enzyme catalyses ubiquinone-0 + caffeine + H2O = ubiquinol-0 + 1,3,7-trimethylurate. It carries out the reaction theobromine + a ubiquinone + H2O = 3,7-dimethylurate + a ubiquinol. In terms of biological role, component of the caffeine dehydrogenase complex that catalyzes the hydrolytical oxidation of 1,3,7-trimethylxanthine (caffeine) by incorporation of an oxygen atom originating from a water molecule into position C-8 to produce 1,3,7-trimethyluric acid (TMU). Coenzyme Q0 (ubiquinone-0) is the preferred electron acceptor and, to a lesser extent, coenzyme Q2 (ubiquinone-2) can also be used, but oxygen and NAD(P)(+) cannot. Is involved in a caffeine degradation pathway that allows Pseudomonas sp. strain CBB1 to grow on caffeine as the sole carbon and nitrogen source. Is also active with theobromine as substrate, but shows a very poor activity with theophylline and is not active with xanthine, 3-methylxanthine, 7-methylxanthine, TMU, and 3,7-dimethylurate. This chain is Caffeine dehydrogenase subunit gamma, found in Pseudomonas sp. (strain CBB1).